The primary structure comprises 72 residues: MAFLKKSLFLVLFLGLVSLSICDEEKRENEDEEEQEDDEQSEEKRGMWGSLLKGVATVVKHVLPHALSSQQS.

The signal sequence occupies residues M1–C22. The propeptide occupies D23–E43. The disordered stretch occupies residues E24 to R45. The segment covering E30–S41 has biased composition (acidic residues).

It belongs to the frog skin active peptide (FSAP) family. As to expression, expressed by the skin glands.

The protein resides in the secreted. In terms of biological role, possesses a potent antimicrobial activity against Gram-positive and Gram-negative bacteria. Probably acts by disturbing membrane functions with its amphipathic structure. The protein is Dermaseptin AA-3-4 of Agalychnis annae (Blue-sided leaf frog).